The primary structure comprises 549 residues: Leucine-rich repeat, immunoglobulin-like domain and transmembrane domain-containing protein 2 (549 aa).

The signal sequence occupies residues 1-22; sequence MAFVFYCFLQVLVSWVIHAVQP. Residues 23–54 enclose the LRRNT domain; sequence FCLPECTCSEESFGRSLQCMSMSLGKIPDNFP. LRR repeat units lie at residues 80–103, 104–125, 128–149, and 152–173; these read SLEY…EDLP, ELRE…AFRA, LLRV…ALQF, and NLIY…VFLN. Asparagine 90 carries N-linked (GlcNAc...) asparagine glycosylation. An LRRCT domain is found at 200–252; that stretch reads NPWLCDCRLRGLAQFVKSVGPPFILVNSYLVCQGPVSKAGQLLHETELGVCMK. Residues 253-339 enclose the Ig-like domain; that stretch reads PTISTPSVNV…FNSIGRSSLV (87 aa). The N-linked (GlcNAc...) asparagine glycan is linked to asparagine 261. The cysteines at positions 274 and 327 are disulfide-linked. The Fibronectin type-III domain maps to 361 to 447; that stretch reads EVSAYVDLRV…QPPSQGQCVV (87 aa). A helical transmembrane segment spans residues 463–483; it reads LLHVTVVLCAVLLALPVGAYV. Asparagine 491 is a glycosylation site (N-linked (GlcNAc...) asparagine). Residues 521–549 are disordered; it reads FKDPSGVYEDGESHRVMEEDEEVEKEGIS. Residues 538 to 549 are compositionally biased toward acidic residues; the sequence is EEDEEVEKEGIS.

In terms of assembly, interacts with LRIT1; may form a heterodimer with LRIT1.

Its subcellular location is the membrane. The polypeptide is Leucine-rich repeat, immunoglobulin-like domain and transmembrane domain-containing protein 2 (Lrit2) (Mus musculus (Mouse)).